A 323-amino-acid chain; its full sequence is Cell division protein ZipA (323 aa).

Topologically, residues 1-5 (MQELR) are periplasmic. A helical transmembrane segment spans residues 6–26 (FVLIVVGALAIAALLFHGLWT). Residues 27–323 (SKKEGKAKFG…QIVEFNAANA (297 aa)) lie on the Cytoplasmic side of the membrane. A disordered region spans residues 35-92 (FGNKPLGKLDVDQEDKDTPGQERDFAPDPEDDFEIIRKDRKEPDFGMENSFDNKFSSD). Basic and acidic residues-rich tracts occupy residues 41-60 (GKLDVDQEDKDTPGQERDFA) and 68-78 (EIIRKDRKEPD).

The protein belongs to the ZipA family. As to quaternary structure, interacts with FtsZ via their C-terminal domains.

It localises to the cell inner membrane. Its function is as follows. Essential cell division protein that stabilizes the FtsZ protofilaments by cross-linking them and that serves as a cytoplasmic membrane anchor for the Z ring. Also required for the recruitment to the septal ring of downstream cell division proteins. The protein is Cell division protein ZipA of Vibrio campbellii (strain ATCC BAA-1116).